A 264-amino-acid chain; its full sequence is Thymidylate synthase (264 aa).

Arginine 21 is a binding site for dUMP. Histidine 51 serves as a coordination point for (6R)-5,10-methylene-5,6,7,8-tetrahydrofolate. 126–127 contacts dUMP; the sequence is RR. The active-site Nucleophile is cysteine 146. DUMP contacts are provided by residues 166–169, asparagine 177, and 207–209; these read RSCD and HLY. Aspartate 169 provides a ligand contact to (6R)-5,10-methylene-5,6,7,8-tetrahydrofolate. Alanine 263 lines the (6R)-5,10-methylene-5,6,7,8-tetrahydrofolate pocket.

Belongs to the thymidylate synthase family. Bacterial-type ThyA subfamily. Homodimer.

It is found in the cytoplasm. It catalyses the reaction dUMP + (6R)-5,10-methylene-5,6,7,8-tetrahydrofolate = 7,8-dihydrofolate + dTMP. Its pathway is pyrimidine metabolism; dTTP biosynthesis. Catalyzes the reductive methylation of 2'-deoxyuridine-5'-monophosphate (dUMP) to 2'-deoxythymidine-5'-monophosphate (dTMP) while utilizing 5,10-methylenetetrahydrofolate (mTHF) as the methyl donor and reductant in the reaction, yielding dihydrofolate (DHF) as a by-product. This enzymatic reaction provides an intracellular de novo source of dTMP, an essential precursor for DNA biosynthesis. The chain is Thymidylate synthase from Sodalis glossinidius (strain morsitans).